The following is a 381-amino-acid chain: Alkanesulfonate monooxygenase (381 aa).

This sequence belongs to the SsuD family. In terms of assembly, homotetramer.

The catalysed reaction is an alkanesulfonate + FMNH2 + O2 = an aldehyde + FMN + sulfite + H2O + 2 H(+). Catalyzes the desulfonation of aliphatic sulfonates. The sequence is that of Alkanesulfonate monooxygenase from Escherichia coli O8 (strain IAI1).